A 199-amino-acid chain; its full sequence is Inner membrane protein E199L (199 aa).

Residue N131 is glycosylated (N-linked (GlcNAc...) asparagine; by host). Residues 150–170 traverse the membrane as a helical segment; the sequence is INVMNHPFLTLILIILILIII.

This sequence belongs to the asfivirus E199L family. Interacts with host PYCR2; this interaction results in autophagy activation. In terms of processing, contains intramolecular disulfide bonds.

The protein localises to the virion membrane. The protein resides in the host membrane. Essential for viral fusion with host endosomal membrane and core release. Not required for virus morphogenesis and egress. Induces complete autophagy through the interaction with and down-regulation of host PYCR2. This is Inner membrane protein E199L from African swine fever virus (isolate Tick/South Africa/Pretoriuskop Pr4/1996) (ASFV).